A 155-amino-acid chain; its full sequence is Ferredoxin-6, chloroplastic (155 aa).

A chloroplast-targeting transit peptide spans 1–58; sequence MSTATAPRLPAPRSGASYHYQTTAAPAANTLSFAGHARQAARASGPRLSSRFVASAAA. One can recognise a 2Fe-2S ferredoxin-type domain in the interval 61–152; it reads HKVKLVGPDG…DCVIHTHKEE (92 aa). [2Fe-2S] cluster-binding residues include Cys98, Cys103, Cys106, and Cys136.

It belongs to the 2Fe2S plant-type ferredoxin family. The cofactor is [2Fe-2S] cluster.

It is found in the plastid. The protein resides in the chloroplast. Functionally, ferredoxins are iron-sulfur proteins that transfer electrons in a wide variety of metabolic reactions. In Zea mays (Maize), this protein is Ferredoxin-6, chloroplastic (FDX6).